Consider the following 186-residue polypeptide: Probable nicotinate-nucleotide adenylyltransferase (186 aa).

Belongs to the NadD family.

The catalysed reaction is nicotinate beta-D-ribonucleotide + ATP + H(+) = deamido-NAD(+) + diphosphate. The protein operates within cofactor biosynthesis; NAD(+) biosynthesis; deamido-NAD(+) from nicotinate D-ribonucleotide: step 1/1. Functionally, catalyzes the reversible adenylation of nicotinate mononucleotide (NaMN) to nicotinic acid adenine dinucleotide (NaAD). This chain is Probable nicotinate-nucleotide adenylyltransferase, found in Thermus thermophilus (strain ATCC 27634 / DSM 579 / HB8).